The following is a 188-amino-acid chain: dCTP deaminase (188 aa).

Residues 111-116 (KSTYAR), 135-137 (TLE), glutamine 156, tyrosine 170, and glutamine 180 contribute to the dCTP site. The active-site Proton donor/acceptor is glutamate 137.

Belongs to the dCTP deaminase family. As to quaternary structure, homotrimer.

The enzyme catalyses dCTP + H2O + H(+) = dUTP + NH4(+). It functions in the pathway pyrimidine metabolism; dUMP biosynthesis; dUMP from dCTP (dUTP route): step 1/2. In terms of biological role, catalyzes the deamination of dCTP to dUTP. The polypeptide is dCTP deaminase (Francisella philomiragia subsp. philomiragia (strain ATCC 25017 / CCUG 19701 / FSC 153 / O#319-036)).